The chain runs to 143 residues: Large ribosomal subunit protein uL11 (143 aa).

It belongs to the universal ribosomal protein uL11 family. In terms of assembly, part of the ribosomal stalk of the 50S ribosomal subunit. Interacts with L10 and the large rRNA to form the base of the stalk. L10 forms an elongated spine to which L12 dimers bind in a sequential fashion forming a multimeric L10(L12)X complex. Post-translationally, one or more lysine residues are methylated.

In terms of biological role, forms part of the ribosomal stalk which helps the ribosome interact with GTP-bound translation factors. The polypeptide is Large ribosomal subunit protein uL11 (Allorhizobium ampelinum (strain ATCC BAA-846 / DSM 112012 / S4) (Agrobacterium vitis (strain S4))).